A 511-amino-acid chain; its full sequence is Arginine-containing cyclodipeptide synthase eshA (511 aa).

The Conserved DDXXE motif signature appears at 413–417 (DDSAE).

Belongs to the arginine-containing cyclodipeptide synthase family.

The enzyme catalyses L-arginyl-tRNA(Arg) + L-leucyl-tRNA(Leu) = cyclo(L-arginyl-L-leucyl) + tRNA(Arg) + tRNA(Leu) + 2 H(+). The protein operates within secondary metabolite biosynthesis. Functionally, arginine-containing cyclodipeptide synthase; part of the cluster that mediates the biosynthesis of a highly modified cyclo-arginine-leucine dipeptide (cRW). Within the pathway, eshA acts as the scaffold-generating enzyme and is responsible for formation of the cyclo-Arg-Leu diketopiperazine (cRL) from L-arginyl-tRNA(Arg) + L-Leucyl-tRNA(Leu). Additional enzymes from the cluster then further modify the cyclo-Arg-Leu diketopiperazine (cRW) scaffold. This chain is Arginine-containing cyclodipeptide synthase eshA, found in Penicillium shearii (Eupenicillium shearii).